A 158-amino-acid chain; its full sequence is Transcription factor BTF3 homolog 4 (158 aa).

One can recognise an NAC-A/B domain in the interval 33–98; it reads TADDKKLQSS…AEAKPITEML (66 aa). Residues 124–158 are disordered; the sequence is VLDSKAPKSEDIDEEDDDVPDLAENFDEASKNEAN. A compositionally biased stretch (acidic residues) spans 134 to 150; the sequence is DIDEEDDDVPDLAENFD.

It belongs to the NAC-beta family.

The chain is Transcription factor BTF3 homolog 4 (BTF3L4) from Gallus gallus (Chicken).